A 160-amino-acid chain; its full sequence is NADH-quinone oxidoreductase subunit B (160 aa).

[4Fe-4S] cluster contacts are provided by C39, C40, C104, and C135.

This sequence belongs to the complex I 20 kDa subunit family. NDH-1 is composed of 14 different subunits. Subunits NuoB, C, D, E, F, and G constitute the peripheral sector of the complex. Requires [4Fe-4S] cluster as cofactor.

It is found in the cell membrane. The enzyme catalyses a quinone + NADH + 5 H(+)(in) = a quinol + NAD(+) + 4 H(+)(out). NDH-1 shuttles electrons from NADH, via FMN and iron-sulfur (Fe-S) centers, to quinones in the respiratory chain. The immediate electron acceptor for the enzyme in this species is believed to be a menaquinone. Couples the redox reaction to proton translocation (for every two electrons transferred, four hydrogen ions are translocated across the cytoplasmic membrane), and thus conserves the redox energy in a proton gradient. The protein is NADH-quinone oxidoreductase subunit B of Amoebophilus asiaticus (strain 5a2).